Consider the following 439-residue polypeptide: 26S proteasome regulatory subunit 4 (439 aa).

Disordered regions lie at residues 1-48 and 82-104; these read MGQN…AMKL and ERLK…LRGT. Basic and acidic residues-rich tracts occupy residues 12–25 and 82–102; these read GEKK…KKYE and ERLK…DDLR. 225–232 is a binding site for ATP; it reads GPPGTGKT.

The protein belongs to the AAA ATPase family. As to quaternary structure, interacts with PSMD5.

Its subcellular location is the cytoplasm. The protein localises to the nucleus. The 26S proteasome is involved in the ATP-dependent degradation of ubiquitinated proteins. The regulatory (or ATPase) complex confers ATP dependency and substrate specificity to the 26S complex. This Drosophila melanogaster (Fruit fly) protein is 26S proteasome regulatory subunit 4 (Rpt2).